The chain runs to 525 residues: Allantoate deiminase (525 aa).

The signal sequence occupies residues 1 to 53; it reads MAVPHPSSSSSRSHPFLSHVYHTSFHHHHHHNHPSLVLFWCLVFSLLSPLALS. The span at 56–75 shows a compositional bias: low complexity; that stretch reads SSSSSSSSDSSSSSSSHISL. Positions 56 to 78 are disordered; that stretch reads SSSSSSSSDSSSSSSSHISLGIG. The N-linked (GlcNAc...) asparagine glycan is linked to N156. Mn(2+)-binding residues include H167, D178, E215, H281, and H499.

This sequence belongs to the peptidase M20A family. In terms of assembly, homodimer. It depends on Mn(2+) as a cofactor. As to expression, expressed in seedlings, roots, stems, leaves, flowers, siliques and seeds.

The protein resides in the endoplasmic reticulum. The enzyme catalyses allantoate + H2O + 2 H(+) = (S)-2-ureidoglycine + NH4(+) + CO2. Its activity is regulated as follows. Inhibited by borate, fluoride, L-Asn and L-Asp, but not by phenylphosphorodiamidate. Involved in the catabolism of purine nucleotides. Can use allantoate as substrate, but not Nalpha-carbamoyl-L-Asp, Nalpha-carbamoyl-L-Ala or Nalpha-carbamoyl-Gly. The sequential activity of AAH, UGLYAH and UAH allows a complete purine breakdown without the intermediate generation of urea. Involved in the regulation of seed maturation and seed dormancy. This Arabidopsis thaliana (Mouse-ear cress) protein is Allantoate deiminase.